Consider the following 511-residue polypeptide: Bifunctional purine biosynthesis protein PurH (511 aa).

An MGS-like domain is found at 1 to 145 (MKKRALVSVS…KNHKFVSVIV (145 aa)).

The protein belongs to the PurH family.

The enzyme catalyses (6R)-10-formyltetrahydrofolate + 5-amino-1-(5-phospho-beta-D-ribosyl)imidazole-4-carboxamide = 5-formamido-1-(5-phospho-D-ribosyl)imidazole-4-carboxamide + (6S)-5,6,7,8-tetrahydrofolate. The catalysed reaction is IMP + H2O = 5-formamido-1-(5-phospho-D-ribosyl)imidazole-4-carboxamide. Its pathway is purine metabolism; IMP biosynthesis via de novo pathway; 5-formamido-1-(5-phospho-D-ribosyl)imidazole-4-carboxamide from 5-amino-1-(5-phospho-D-ribosyl)imidazole-4-carboxamide (10-formyl THF route): step 1/1. It participates in purine metabolism; IMP biosynthesis via de novo pathway; IMP from 5-formamido-1-(5-phospho-D-ribosyl)imidazole-4-carboxamide: step 1/1. This Bacillus anthracis (strain A0248) protein is Bifunctional purine biosynthesis protein PurH.